Here is a 243-residue protein sequence, read N- to C-terminus: Peptidyl-tRNA hydrolase (243 aa).

Tyrosine 14 lines the tRNA pocket. Histidine 19 serves as the catalytic Proton acceptor. Phenylalanine 64, asparagine 66, and asparagine 112 together coordinate tRNA. The span at 190–205 (KAEEEKPAKEMKDAGK) shows a compositional bias: basic and acidic residues. Residues 190-243 (KAEEEKPAKEMKDAGKKPASQSHIHQARNHNQPKLPATGPMADMLKKMFGKKGD) are disordered. Polar residues predominate over residues 208–221 (ASQSHIHQARNHNQ).

This sequence belongs to the PTH family. As to quaternary structure, monomer.

Its subcellular location is the cytoplasm. The enzyme catalyses an N-acyl-L-alpha-aminoacyl-tRNA + H2O = an N-acyl-L-amino acid + a tRNA + H(+). Functionally, hydrolyzes ribosome-free peptidyl-tRNAs (with 1 or more amino acids incorporated), which drop off the ribosome during protein synthesis, or as a result of ribosome stalling. Catalyzes the release of premature peptidyl moieties from peptidyl-tRNA molecules trapped in stalled 50S ribosomal subunits, and thus maintains levels of free tRNAs and 50S ribosomes. The protein is Peptidyl-tRNA hydrolase of Rhizobium johnstonii (strain DSM 114642 / LMG 32736 / 3841) (Rhizobium leguminosarum bv. viciae).